A 59-amino-acid chain; its full sequence is Large ribosomal subunit protein uL30 (59 aa).

It belongs to the universal ribosomal protein uL30 family. As to quaternary structure, part of the 50S ribosomal subunit.

The sequence is that of Large ribosomal subunit protein uL30 from Ectopseudomonas mendocina (strain ymp) (Pseudomonas mendocina).